The primary structure comprises 309 residues: MRLEQLQAFLKVAELGSFQQAALQSEVTQSTISRQIQGLESALKCQLFHRGAQAKLTVAGELFLRRARKICQEWDVASEEISSLFQGKQTELCVAAIHSVCVSSLPSLLPKFCLGHPQIQLRVTALGSDRALKVLQDGLVDVAIIMSHRNLTNTKELAIKPLYEEQICILMASDHPLTTKKFITWENLGPYPQVIFKDGYRMRRLVEDEFSRREIPLNVSLELNIPEAFYGVVQGSEMIALMPQSLVTPVIDNPNFSVRYLFCPESGDRQDFRRQVSVVTTVDRLQIPPVAEFFNLVVDHYRCGALTVK.

The region spanning 1–57 (MRLEQLQAFLKVAELGSFQQAALQSEVTQSTISRQIQGLESALKCQLFHRGAQAKLT) is the HTH lysR-type domain. The H-T-H motif DNA-binding region spans 18–38 (FQQAALQSEVTQSTISRQIQG).

The protein belongs to the LysR transcriptional regulatory family.

Functionally, seems to regulate utilization of fixed nitrogen by controlling the expression of a certain gene(s) involved in nitrogen metabolism. This chain is Probable nitrogen assimilation transcriptional activator (ntcB), found in Synechocystis sp. (strain ATCC 27184 / PCC 6803 / Kazusa).